A 50-amino-acid polypeptide reads, in one-letter code: Insulin (50 aa).

3 disulfides stabilise this stretch: Cys-7–Cys-36, Cys-19–Cys-49, and Cys-35–Cys-40.

This sequence belongs to the insulin family. In terms of assembly, heterodimer of a B chain and an A chain linked by two disulfide bonds.

The protein resides in the secreted. Its function is as follows. Insulin decreases blood glucose concentration. It increases cell permeability to monosaccharides, amino acids and fatty acids. It accelerates glycolysis, the pentose phosphate cycle, and glycogen synthesis in liver. The sequence is that of Insulin (ins) from Myoxocephalus scorpius (Shorthorn sculpin).